The chain runs to 397 residues: Lysophospholipid transporter LplT (397 aa).

Helical transmembrane passes span 16–36, 53–73, 91–111, 139–159, 164–184, 227–247, 253–273, 281–301, 305–325, 352–372, and 373–393; these read MLAV…LLFA, VLQM…GQFA, LGAG…LVGI, LMES…GILA, LAAL…NLWI, LFWG…PVAL, AMPT…AGAA, TVSR…AFAV, LLPA…FIVP, NVAM…GVPP, and VAVG…LWVW.

The protein belongs to the major facilitator superfamily. LplT (TC 2.A.1.42) family.

Its subcellular location is the cell inner membrane. Its function is as follows. Catalyzes the facilitated diffusion of 2-acyl-glycero-3-phosphoethanolamine (2-acyl-GPE) into the cell. The polypeptide is Lysophospholipid transporter LplT (Klebsiella pneumoniae subsp. pneumoniae (strain ATCC 700721 / MGH 78578)).